Here is a 491-residue protein sequence, read N- to C-terminus: Proline--tRNA ligase (491 aa).

Belongs to the class-II aminoacyl-tRNA synthetase family. ProS type 3 subfamily. In terms of assembly, homodimer.

Its subcellular location is the cytoplasm. It catalyses the reaction tRNA(Pro) + L-proline + ATP = L-prolyl-tRNA(Pro) + AMP + diphosphate. Its function is as follows. Catalyzes the attachment of proline to tRNA(Pro) in a two-step reaction: proline is first activated by ATP to form Pro-AMP and then transferred to the acceptor end of tRNA(Pro). The sequence is that of Proline--tRNA ligase from Amoebophilus asiaticus (strain 5a2).